The chain runs to 561 residues: Asparagine synthetase [glutamine-hydrolyzing] (561 aa).

Residue cysteine 2 is the For GATase activity of the active site. One can recognise a Glutamine amidotransferase type-2 domain in the interval cysteine 2–lysine 191. L-glutamine is bound by residues arginine 49–valine 53, asparagine 75–glutamate 77, and aspartate 97. The region spanning histidine 213–tyrosine 536 is the Asparagine synthetase domain. ATP contacts are provided by residues leucine 256, isoleucine 288, and serine 363–glycine 364. At lysine 385 the chain carries N6-acetyllysine. Phosphothreonine is present on threonine 545.

The enzyme catalyses L-aspartate + L-glutamine + ATP + H2O = L-asparagine + L-glutamate + AMP + diphosphate + H(+). It participates in amino-acid biosynthesis; L-asparagine biosynthesis; L-asparagine from L-aspartate (L-Gln route): step 1/1. The polypeptide is Asparagine synthetase [glutamine-hydrolyzing] (ASNS) (Bos taurus (Bovine)).